Consider the following 303-residue polypeptide: ATP synthase gamma chain (303 aa).

This sequence belongs to the ATPase gamma chain family. As to quaternary structure, F-type ATPases have 2 components, CF(1) - the catalytic core - and CF(0) - the membrane proton channel. CF(1) has five subunits: alpha(3), beta(3), gamma(1), delta(1), epsilon(1). CF(0) has three main subunits: a, b and c.

The protein resides in the cell membrane. Functionally, produces ATP from ADP in the presence of a proton gradient across the membrane. The gamma chain is believed to be important in regulating ATPase activity and the flow of protons through the CF(0) complex. In Nocardioides sp. (strain ATCC BAA-499 / JS614), this protein is ATP synthase gamma chain.